The chain runs to 191 residues: Small ribosomal subunit protein uS4A (191 aa).

Residues S50 and S161 each carry the phosphoserine modification. The 75-residue stretch at 107–181 (RRLQTQVFKL…CKRKRLRSQE (75 aa)) folds into the S4 RNA-binding domain. The residue at position 164 (Y164) is a Phosphotyrosine. The segment at 166–191 (GGRPGRCKRKRLRSQEGGEGEEAEEE) is disordered. S179 carries the phosphoserine modification.

Belongs to the universal ribosomal protein uS4 family. Component of the small ribosomal subunit (SSU). Mature yeast ribosomes consist of a small (40S) and a large (60S) subunit. The 40S small subunit contains 1 molecule of ribosomal RNA (18S rRNA) and at least 33 different proteins. The large 60S subunit contains 3 rRNA molecules (25S, 5.8S and 5S rRNA) and at least 46 different proteins. Interacts with snoRNA U3. uS11 interacts with MPP10. Component of the ribosomal small subunit (SSU) processome composed of at least 40 protein subunits and snoRNA U3.

It is found in the cytoplasm. Component of the ribosome, a large ribonucleoprotein complex responsible for the synthesis of proteins in the cell. The small ribosomal subunit (SSU) binds messenger RNAs (mRNAs) and translates the encoded message by selecting cognate aminoacyl-transfer RNA (tRNA) molecules. The large subunit (LSU) contains the ribosomal catalytic site termed the peptidyl transferase center (PTC), which catalyzes the formation of peptide bonds, thereby polymerizing the amino acids delivered by tRNAs into a polypeptide chain. The nascent polypeptides leave the ribosome through a tunnel in the LSU and interact with protein factors that function in enzymatic processing, targeting, and the membrane insertion of nascent chains at the exit of the ribosomal tunnel. uS4 is involved in nucleolar processing of pre-18S ribosomal RNA and ribosome assembly. The sequence is that of Small ribosomal subunit protein uS4A (rps901) from Schizosaccharomyces pombe (strain 972 / ATCC 24843) (Fission yeast).